The chain runs to 166 residues: Urease accessory protein UreE (166 aa).

The tract at residues 133-154 is disordered; that stretch reads QPEHGAYGGGHHHSRHGDEDFN.

The protein belongs to the UreE family.

The protein localises to the cytoplasm. Functionally, involved in urease metallocenter assembly. Binds nickel. Probably functions as a nickel donor during metallocenter assembly. This chain is Urease accessory protein UreE, found in Pseudomonas fluorescens (strain SBW25).